The following is a 208-amino-acid chain: Ectodysplasin-A receptor-associated adapter protein (208 aa).

The segment covering 1-18 has biased composition (basic and acidic residues); it reads MASPDDPLRSDHMAKEPV. Residues 1-99 form a disordered region; it reads MASPDDPLRS…KGSCSCPSCS (99 aa). Polar residues predominate over residues 49–61; that stretch reads TVNSNCPPNSDDQ. Residues 116–195 form the Death domain; that stretch reads DTIRIKLDPC…KILRRWVDEE (80 aa).

As to quaternary structure, binds EDAR. Self-associates and binds TRAF1, TRAF2 and TRAF3.

It is found in the cytoplasm. Adapter protein that interacts with EDAR DEATH domain and couples the receptor to EDA signaling pathway during morphogenesis of ectodermal organs. Mediates the activation of NF-kappa-B. The sequence is that of Ectodysplasin-A receptor-associated adapter protein (Edaradd) from Mus musculus (Mouse).